The sequence spans 103 residues: UPF0473 protein SGO_2040 (103 aa).

Belongs to the UPF0473 family.

This chain is UPF0473 protein SGO_2040, found in Streptococcus gordonii (strain Challis / ATCC 35105 / BCRC 15272 / CH1 / DL1 / V288).